A 937-amino-acid polypeptide reads, in one-letter code: Valine--tRNA ligase (937 aa).

The short motif at 44 to 54 (PNVTGTLHMGH) is the 'HIGH' region element. Positions 548–552 (KMSKS) match the 'KMSKS' region motif. Lys-551 contacts ATP. A coiled-coil region spans residues 874–937 (AAETARLTKE…KLKAQLLKLA (64 aa)).

This sequence belongs to the class-I aminoacyl-tRNA synthetase family. ValS type 1 subfamily. In terms of assembly, monomer.

It is found in the cytoplasm. It catalyses the reaction tRNA(Val) + L-valine + ATP = L-valyl-tRNA(Val) + AMP + diphosphate. Functionally, catalyzes the attachment of valine to tRNA(Val). As ValRS can inadvertently accommodate and process structurally similar amino acids such as threonine, to avoid such errors, it has a 'posttransfer' editing activity that hydrolyzes mischarged Thr-tRNA(Val) in a tRNA-dependent manner. The protein is Valine--tRNA ligase of Laribacter hongkongensis (strain HLHK9).